A 165-amino-acid chain; its full sequence is Ubiquitin D (165 aa).

2 Ubiquitin-like domains span residues 6–81 (SCLC…LKVV) and 90–163 (LFLV…CYCI).

This sequence belongs to the ubiquitin D family. Interacts directly with the 26S proteasome. Interacts with NUB1; this interaction facilitates the linking of UBD-conjugated target protein to the proteasome complex and accelerates its own degradation and that of its conjugates. Interacts (via ubiquitin-like 1 domain) with the spindle checkpoint protein MAD2L1 during mitosis. Present in aggresomes of proteasome inhibited cells. Interacts with HDAC6 under proteasome impairment conditions. Forms a thioester with UBA6 in cells stimulated with tumor necrosis factor-alpha (TNFa) and interferon-gamma (IFNg). Interacts with SQSTM1 and TP53/p53. Post-translationally, can be acetylated. In terms of tissue distribution, constitutively expressed in mature dendritic cells and B-cells. Mostly expressed in the reticuloendothelial system (e.g. thymus, spleen), the gastrointestinal system, kidney, lung and prostate gland.

It is found in the nucleus. The protein resides in the cytoplasm. Ubiquitin-like protein modifier which can be covalently attached to target proteins and subsequently leads to their degradation by the 26S proteasome, in a NUB1-dependent manner. Conjugation to the target protein is activated by UBA6 via adenylation of its C-terminal glycine. Promotes the expression of the proteasome subunit beta type-9 (PSMB9/LMP2). Regulates TNF-alpha-induced and LPS-mediated activation of the central mediator of innate immunity NF-kappa-B by promoting TNF-alpha-mediated proteasomal degradation of ubiquitinated-I-kappa-B-alpha. Required for TNF-alpha-induced p65 nuclear translocation in renal tubular epithelial cells (RTECs). May be involved in dendritic cell (DC) maturation, the process by which immature dendritic cells differentiate into fully competent antigen-presenting cells that initiate T-cell responses. Mediates mitotic non-disjunction and chromosome instability, in long-term in vitro culture and cancers, by abbreviating mitotic phase and impairing the kinetochore localization of MAD2L1 during the prometaphase stage of the cell cycle. May be involved in the formation of aggresomes when proteasome is saturated or impaired. Mediates apoptosis in a caspase-dependent manner, especially in renal epithelium and tubular cells during renal diseases such as polycystic kidney disease and Human immunodeficiency virus (HIV)-associated nephropathy (HIVAN). The polypeptide is Ubiquitin D (UBD) (Homo sapiens (Human)).